A 396-amino-acid chain; its full sequence is Phosphoglycerate kinase (396 aa).

Residues 20–22 (DIN), Arg-35, 58–61 (HQGR), Arg-115, and Arg-155 each bind substrate. ATP contacts are provided by residues Glu-328 and 353 to 356 (GGDT).

The protein belongs to the phosphoglycerate kinase family. As to quaternary structure, monomer.

The protein resides in the cytoplasm. It carries out the reaction (2R)-3-phosphoglycerate + ATP = (2R)-3-phospho-glyceroyl phosphate + ADP. It participates in carbohydrate degradation; glycolysis; pyruvate from D-glyceraldehyde 3-phosphate: step 2/5. This is Phosphoglycerate kinase from Natronomonas pharaonis (strain ATCC 35678 / DSM 2160 / CIP 103997 / JCM 8858 / NBRC 14720 / NCIMB 2260 / Gabara) (Halobacterium pharaonis).